A 658-amino-acid polypeptide reads, in one-letter code: Threonine--tRNA ligase (658 aa).

Residues 1-64 (MSNTVSLQFP…GASGKVEIIT (64 aa)) enclose the TGS domain. The interval 246-548 (DHRRLGREMD…LIENFAGHMP (303 aa)) is catalytic. Zn(2+)-binding residues include C343, H394, and H525.

It belongs to the class-II aminoacyl-tRNA synthetase family. In terms of assembly, homodimer. It depends on Zn(2+) as a cofactor.

Its subcellular location is the cytoplasm. It carries out the reaction tRNA(Thr) + L-threonine + ATP = L-threonyl-tRNA(Thr) + AMP + diphosphate + H(+). Catalyzes the attachment of threonine to tRNA(Thr) in a two-step reaction: L-threonine is first activated by ATP to form Thr-AMP and then transferred to the acceptor end of tRNA(Thr). Also edits incorrectly charged L-seryl-tRNA(Thr). The chain is Threonine--tRNA ligase from Brucella melitensis biotype 2 (strain ATCC 23457).